The following is a 304-amino-acid chain: tRNA pseudouridine synthase B (304 aa).

Catalysis depends on D38, which acts as the Nucleophile.

This sequence belongs to the pseudouridine synthase TruB family. Type 1 subfamily.

It catalyses the reaction uridine(55) in tRNA = pseudouridine(55) in tRNA. Responsible for synthesis of pseudouridine from uracil-55 in the psi GC loop of transfer RNAs. The chain is tRNA pseudouridine synthase B from Listeria innocua serovar 6a (strain ATCC BAA-680 / CLIP 11262).